Reading from the N-terminus, the 1296-residue chain is Aggregation substance (1296 aa).

Residues Met1–Ala43 form the signal peptide. Disordered stretches follow at residues Thr48–Glu188 and His1221–Ala1245. Residues Lys89–Gly99 show a composition bias toward basic and acidic residues. Polar residues-rich tracts occupy residues Ala100–Thr117 and Gln125–Pro138. Residues Lys160–Pro178 show a composition bias toward basic and acidic residues. Residues Leu1261–Gly1265 carry the LPXTG sorting signal motif. Thr1264 carries the post-translational modification Pentaglycyl murein peptidoglycan amidated threonine. Positions Gly1265–Lys1296 are cleaved as a propeptide — removed by sortase.

This sequence belongs to the antigen I/II family.

It localises to the secreted. It is found in the cell wall. Functionally, aggregation substance allows donor and recipient strains to form tight aggregates which allow the non-motile bacteria to maintain physical contact over a period of time sufficient to permit conjugative transfer of the sex pheromone plasmid from donor to recipient strains. The polypeptide is Aggregation substance (asa1) (Enterococcus faecalis (strain ATCC 700802 / V583)).